The sequence spans 60 residues: Large ribosomal subunit protein bL33 (60 aa).

This sequence belongs to the bacterial ribosomal protein bL33 family.

This is Large ribosomal subunit protein bL33 from Flavobacterium johnsoniae (strain ATCC 17061 / DSM 2064 / JCM 8514 / BCRC 14874 / CCUG 350202 / NBRC 14942 / NCIMB 11054 / UW101) (Cytophaga johnsonae).